We begin with the raw amino-acid sequence, 473 residues long: Cysteine protease ATG4A (473 aa).

The disordered stretch occupies residues 1 to 33 (MTSLPGRGVSPSSSDPLCEGNAAPSSSSSGQDL). Residue Cys160 is the Nucleophile of the active site. Residues Asp357 and His359 contribute to the active site.

This sequence belongs to the peptidase C54 family. As to quaternary structure, interacts with ATG8.

Its subcellular location is the cytoplasm. The catalysed reaction is [protein]-C-terminal L-amino acid-glycyl-phosphatidylethanolamide + H2O = [protein]-C-terminal L-amino acid-glycine + a 1,2-diacyl-sn-glycero-3-phosphoethanolamine. Its function is as follows. Cysteine protease that plays a key role in autophagy by mediating both proteolytic activation and delipidation of ATG8 family proteins. The protease activity is required for proteolytic activation of ATG8 family proteins: cleaves the C-terminal amino acid of ATG8 proteins to reveal a C-terminal glycine. Exposure of the glycine at the C-terminus is essential for ATG8 proteins conjugation to phosphatidylethanolamine (PE) and insertion to membranes, which is necessary for autophagy. In addition to the protease activity, also mediates delipidation of PE-conjugated ATG8 proteins. This is Cysteine protease ATG4A (ATG4A) from Oryza sativa subsp. indica (Rice).